We begin with the raw amino-acid sequence, 504 residues long: MAAQAVSLLREVARLEAPLEELRALQSVVQAVPLHELREQAAELRLRPLFSLLNQNNREQTALCVSILERLLQAVEPIHLARNLRLDLQRGLTHPDDSVKTLTLSQIGRIVENSEAVTEILNNAELLKQIVYCIGGENLSVAKAAIKSLSRISLTQAGLEALFESNLLDDLKNVMKTNDVVRYRVYELIIDISSVSSESLNYCTTSGLVTQLLKELTGEDVLVRATCIEMVTSLAYTHHGRQYLAQEGVIDQISNIIVGADSDPFSGFYLPGFVKFFGNLAVMDSPQQICERYPVFLEKVFEMADSQDPTMIGVAVDTVGILGSSVEGKQVLQKTGTRFERVLMRVGYQAKNASTELKIRCLDAVSSLLYLSPEQQTDDFLGMTESWFSSMSRDSLELFRGISNQPFPELHCAALKVFTAIADQPWAQRLMFNSPGFVEFVMDRSVEHDKASKDAKYELVKALANSKTVAEIFGNSNYLRLRAYLSEGPYYVKPVATTAVEGAD.

Ala-2 bears the N-acetylalanine mark.

This sequence belongs to the proteasome subunit S5B/HSM3 family. As to quaternary structure, interacts with PSMC1, PSMC2, PSMD1 and PSMD6. Part of transient complex containing PSMD5, PSMC2, PSMC1 and PSMD2 formed during the assembly of the 26S proteasome.

Functionally, acts as a chaperone during the assembly of the 26S proteasome, specifically of the base subcomplex of the PA700/19S regulatory complex (RC). In the initial step of the base subcomplex assembly is part of an intermediate PSMD5:PSMC2:PSMC1:PSMD2 module which probably assembles with a PSMD10:PSMC4:PSMC5:PAAF1 module followed by dissociation of PSMD5. In Mus musculus (Mouse), this protein is 26S proteasome non-ATPase regulatory subunit 5 (Psmd5).